The primary structure comprises 330 residues: Peroxisomal membrane protein PEX13 (330 aa).

The segment covering 1–14 (MSAPPTNQPPPLPP) has biased composition (pro residues). The disordered stretch occupies residues 1–20 (MSAPPTNQPPPLPPRSFDNQ). A helical membrane pass occupies residues 193–213 (ASVNWPAALFWVVAIGGPWLI). Residues 235–300 (APHYTAQALF…PINYVRIVGK (66 aa)) enclose the SH3 domain.

Belongs to the peroxin-13 family. In terms of assembly, interacts with PEX14/prx-14; forming the PEX13-PEX14 docking complex.

The protein resides in the peroxisome membrane. Its function is as follows. Component of the PEX13-PEX14 docking complex, a translocon channel that specifically mediates the import of peroxisomal cargo proteins bound to PEX5/prx-5 receptor. The PEX13-PEX14 docking complex forms a large import pore which can be opened to a diameter of about 9 nm. Mechanistically, PEX5/prx-5 receptor along with cargo proteins associates with the PEX14/prx-14 subunit of the PEX13-PEX14 docking complex in the cytosol, leading to the insertion of the receptor into the organelle membrane with the concomitant translocation of the cargo into the peroxisome matrix. The protein is Peroxisomal membrane protein PEX13 (prx-13) of Caenorhabditis elegans.